A 634-amino-acid chain; its full sequence is Bacteriophytochrome (634 aa).

Cys-13 is a binding site for biliverdin IXalpha. Positions 13 to 118 constitute a PAS 1 domain; the sequence is CAREPIHIPG…YPQQWLVEME (106 aa). The photosensory core domain stretch occupies residues 13-514; that stretch reads CAREPIHIPG…ELMERKRFQQ (502 aa). Positions 151–305 constitute a GAF domain; that stretch reads RVAKGLRSLI…VTDAVARTLA (155 aa). The tract at residues 325–508 is phytochrome-specific (PHY); that stretch reads TVREKLITDF…SLRVLIELME (184 aa). The tract at residues 452 to 480 is tongue domain; sequence WAGNPQLAKLEDIPNSRLSPRKSFDLWQQ. Residues 515-590 form the PAS 2 domain; it reads DFTLLEASLS…ELLQDALRNG (76 aa). Residues 515–634 form a PAS9, output module, not required to bind biliverdin IX-alpha, required for dimerization region; sequence DFTLLEASLS…HWLLQLRDPE (120 aa).

In the N-terminal section; belongs to the phytochrome family. In terms of assembly, forms head-to-head homodimers. Contains one covalently linked biliverdin IX-alpha chromophore; present in the crystal structure as a mixture of Pr and Meta-R configurations.

Its function is as follows. Photoreceptor which exists in two forms that are reversibly interconvertible by light: far-red light (733 nm) converts protein to the red-absorbing (Pr) form, while red light (630 nm) partly converts the protein to the far-red-absorbing (Pfr) form. Regulates virulence of X.campestris pv. campestris on its host plants, perhaps by fine-tuning expression to ambient light levels and/or spatial cues. The Pr form may sense light and partially inhibit virulence; in the dark (Pfr form) biofilm and xanathan production rise and bacteria are more virulent. Strains overexpressing this protein have significantly decreased amounts of extracellular beta-1,4-endoglucanase, produce less xanthin and have decreased transcription of genes involved in virulence such as endoglucanases, type 2 secretion systems, xanthan production and flagellar-dependent motility. This is Bacteriophytochrome (bphP) from Xanthomonas campestris pv. campestris (strain 8004).